A 296-amino-acid chain; its full sequence is Haloalkane dehalogenase (296 aa).

Positions 31–155 constitute an AB hydrolase-1 domain; it reads PILFQHGNPT…QDRDLFQAFR (125 aa). Aspartate 108 acts as the Nucleophile in catalysis. The Proton donor role is filled by glutamate 132. Histidine 272 serves as the catalytic Proton acceptor.

The protein belongs to the haloalkane dehalogenase family. Type 2 subfamily. In terms of assembly, monomer.

It is found in the periplasm. It carries out the reaction 1-haloalkane + H2O = a halide anion + a primary alcohol + H(+). It catalyses the reaction (3R,6R)-1,3,4,6-tetrachlorocyclohexa-1,4-diene + 2 H2O = 2,5-dichlorocyclohexa-2,5-dien-1,4-diol + 2 chloride + 2 H(+). The protein operates within xenobiotic degradation; gamma-hexachlorocyclohexane degradation. Its function is as follows. Catalyzes hydrolytic cleavage of carbon-halogen bonds in halogenated aliphatic compounds, leading to the formation of the corresponding primary alcohols, halide ions and protons. Is involved in the degradation of the important environmental pollutant gamma-hexachlorocyclohexane (gamma-HCH or lindane) as it also catalyzes conversion of 1,3,4,6-tetrachloro-1,4-cyclohexadiene (1,4-TCDN) to 2,5-dichloro-2,5-cyclohexadiene-1,4-diol (2,5-DDOL) via the intermediate 2,4,5-trichloro-2,5-cyclohexadiene-1-ol (2,4,5-DNOL). This is Haloalkane dehalogenase from Sphingobium indicum (strain DSM 16412 / CCM 7286 / MTCC 6364 / B90A).